The chain runs to 82 residues: Small ribosomal subunit protein bS16 (82 aa).

Belongs to the bacterial ribosomal protein bS16 family.

The protein is Small ribosomal subunit protein bS16 of Klebsiella pneumoniae subsp. pneumoniae (strain ATCC 700721 / MGH 78578).